Consider the following 885-residue polypeptide: Pyruvate, phosphate dikinase (885 aa).

Residues methionine 1–lysine 342 form an N-terminal region. ATP is bound at residue arginine 91. Residues methionine 343–serine 399 are linker 1. Residues proline 400–isoleucine 497 are central. The active-site Tele-phosphohistidine intermediate is histidine 454. Residues aspartate 498–lysine 533 are linker 2. Residues isoleucine 534–asparagine 885 are C-terminal. 7 residues coordinate substrate: arginine 561, arginine 617, glutamate 752, glycine 773, threonine 774, asparagine 775, and aspartate 776. Glutamate 752 contacts Mg(2+). Aspartate 776 is a Mg(2+) binding site. The active-site Proton donor is cysteine 839.

This sequence belongs to the PEP-utilizing enzyme family. As to quaternary structure, homodimer. The cofactor is Mg(2+).

It catalyses the reaction pyruvate + phosphate + ATP = phosphoenolpyruvate + AMP + diphosphate + H(+). Its function is as follows. Catalyzes the dephosphorylation of phosphoenolpyruvate and diphosphate to produce ATP. This Entamoeba histolytica (strain ATCC 30459 / HM-1:IMSS / ABRM) protein is Pyruvate, phosphate dikinase.